The chain runs to 261 residues: tRNA U34 carboxymethyltransferase (261 aa).

Carboxy-S-adenosyl-L-methionine contacts are provided by residues lysine 25, tryptophan 39, lysine 44, glycine 63, valine 114–glutamate 115, tyrosine 135, and arginine 250.

Belongs to the class I-like SAM-binding methyltransferase superfamily. CmoB family. Homotetramer.

The enzyme catalyses carboxy-S-adenosyl-L-methionine + 5-hydroxyuridine(34) in tRNA = 5-carboxymethoxyuridine(34) in tRNA + S-adenosyl-L-homocysteine + H(+). Functionally, catalyzes carboxymethyl transfer from carboxy-S-adenosyl-L-methionine (Cx-SAM) to 5-hydroxyuridine (ho5U) to form 5-carboxymethoxyuridine (cmo5U) at position 34 in tRNAs. This Helicobacter pylori (strain J99 / ATCC 700824) (Campylobacter pylori J99) protein is tRNA U34 carboxymethyltransferase.